The sequence spans 667 residues: DNA damage checkpoint protein LCD1 (667 aa).

The stretch at lysine 28–glutamate 55 forms a coiled coil.

As to quaternary structure, forms a complex with MEC1.

The protein resides in the cytoplasm. It localises to the nucleus. In terms of biological role, forms a complex with the serine/threonine kinase MEC1 which activates checkpoint signaling upon genotoxic stresses. The MEC1-LCD1 complex is recruited to DNA lesions in order to initiates the DNA repair by homologous recombination. Required for cell growth and meiotic recombination. The protein is DNA damage checkpoint protein LCD1 (LCD1) of Candida glabrata (strain ATCC 2001 / BCRC 20586 / JCM 3761 / NBRC 0622 / NRRL Y-65 / CBS 138) (Yeast).